Here is a 120-residue protein sequence, read N- to C-terminus: UPF0102 protein PTH_1707 (120 aa).

This sequence belongs to the UPF0102 family.

The sequence is that of UPF0102 protein PTH_1707 from Pelotomaculum thermopropionicum (strain DSM 13744 / JCM 10971 / SI).